Reading from the N-terminus, the 381-residue chain is Succinyl-diaminopimelate desuccinylase (381 aa).

H68 is a binding site for Zn(2+). D70 is a catalytic residue. D101 contributes to the Zn(2+) binding site. E135 (proton acceptor) is an active-site residue. The Zn(2+) site is built by E136, E164, and H350.

The protein belongs to the peptidase M20A family. DapE subfamily. Homodimer. It depends on Zn(2+) as a cofactor. Co(2+) is required as a cofactor.

The catalysed reaction is N-succinyl-(2S,6S)-2,6-diaminopimelate + H2O = (2S,6S)-2,6-diaminopimelate + succinate. It functions in the pathway amino-acid biosynthesis; L-lysine biosynthesis via DAP pathway; LL-2,6-diaminopimelate from (S)-tetrahydrodipicolinate (succinylase route): step 3/3. In terms of biological role, catalyzes the hydrolysis of N-succinyl-L,L-diaminopimelic acid (SDAP), forming succinate and LL-2,6-diaminopimelate (DAP), an intermediate involved in the bacterial biosynthesis of lysine and meso-diaminopimelic acid, an essential component of bacterial cell walls. This chain is Succinyl-diaminopimelate desuccinylase, found in Neisseria gonorrhoeae (strain NCCP11945).